Reading from the N-terminus, the 637-residue chain is Probable serine/threonine-protein kinase DDB_G0283065 (637 aa).

Disordered regions lie at residues 36–88 (NNNN…KFNR) and 155–234 (NSNN…RFNN). The segment covering 53–85 (NNSTTKSIDNNNNNTNNSNSNNNNNDNIKNNNK) has biased composition (low complexity). The Protein kinase domain occupies 236–629 (FNDVRVLGKG…NQISTDYDNF (394 aa)). Residues 242–250 (LGKGGFGIV) and lysine 265 each bind ATP. Aspartate 479 acts as the Proton acceptor in catalysis.

The protein belongs to the protein kinase superfamily. Ser/Thr protein kinase family. GCN2 subfamily.

It catalyses the reaction L-seryl-[protein] + ATP = O-phospho-L-seryl-[protein] + ADP + H(+). The catalysed reaction is L-threonyl-[protein] + ATP = O-phospho-L-threonyl-[protein] + ADP + H(+). This chain is Probable serine/threonine-protein kinase DDB_G0283065, found in Dictyostelium discoideum (Social amoeba).